We begin with the raw amino-acid sequence, 90 residues long: Small ribosomal subunit protein bS20 (90 aa).

Residues 1–10 (MANHKSTQKS) show a composition bias toward polar residues. The segment at 1 to 25 (MANHKSTQKSIRQDQKRNLINKSRK) is disordered.

The protein belongs to the bacterial ribosomal protein bS20 family.

Functionally, binds directly to 16S ribosomal RNA. The protein is Small ribosomal subunit protein bS20 of Orientia tsutsugamushi (strain Boryong) (Rickettsia tsutsugamushi).